The sequence spans 778 residues: uncharacterized protein (778 aa).

Composition is skewed to polar residues over residues 1-11 (MPISSPGTRCS), 18-34 (TLQQYSAESVSTEQSLG), and 41-51 (GSITENYVQDS). The segment at 1–60 (MPISSPGTRCSSDLKDPTLQQYSAESVSTEQSLGTFEESKGSITENYVQDSSVDEHDDGN) is disordered. The next 2 membrane-spanning stretches (helical) occupy residues 356-381 (YILMGLAGIGGGLVIGLSSGLLAPII) and 401-423 (GFLAGGGSAALITAGGAISGAHI).

The protein belongs to the TMCO4 family.

It localises to the golgi apparatus membrane. This is an uncharacterized protein from Schizosaccharomyces pombe (strain 972 / ATCC 24843) (Fission yeast).